We begin with the raw amino-acid sequence, 375 residues long: uncharacterized protein (375 aa).

A disordered region spans residues 54–78 (EGIPPPTQSQEPLKPQENISRPIHH).

This is an uncharacterized protein from Bos taurus (Bovine).